The primary structure comprises 497 residues: Putative aldehyde dehydrogenase AldA (497 aa).

213 to 219 (GKGSESG) is an NAD(+) binding site. Residues Glu-257 and Cys-291 contribute to the active site.

It belongs to the aldehyde dehydrogenase family.

It catalyses the reaction an aldehyde + NAD(+) + H2O = a carboxylate + NADH + 2 H(+). The sequence is that of Putative aldehyde dehydrogenase AldA (aldA) from Staphylococcus epidermidis (strain ATCC 35984 / DSM 28319 / BCRC 17069 / CCUG 31568 / BM 3577 / RP62A).